The sequence spans 536 residues: Metal transporter Nramp2 (536 aa).

The tract at residues Met-1–Glu-37 is disordered. Over residues Leu-22–Ser-36 the composition is skewed to low complexity. The N-linked (GlcNAc...) asparagine glycan is linked to Asn-38. The next 12 membrane-spanning stretches (helical) occupy residues Leu-76–Leu-96, Ala-104–Ile-124, Val-161–Leu-181, Phe-185–Leu-205, Leu-213–Gly-233, Ala-259–Val-279, Val-305–Phe-325, Tyr-347–Gln-367, Ser-400–Leu-420, Ile-435–Phe-455, Ala-465–Ile-485, and Leu-492–Val-512.

It belongs to the NRAMP (TC 2.A.55) family.

The protein resides in the membrane. Probable divalent metal transporter. This is Metal transporter Nramp2 from Populus trichocarpa (Western balsam poplar).